The following is a 341-amino-acid chain: S-adenosylmethionine:tRNA ribosyltransferase-isomerase (341 aa).

This sequence belongs to the QueA family. As to quaternary structure, monomer.

The protein resides in the cytoplasm. The catalysed reaction is 7-aminomethyl-7-carbaguanosine(34) in tRNA + S-adenosyl-L-methionine = epoxyqueuosine(34) in tRNA + adenine + L-methionine + 2 H(+). It functions in the pathway tRNA modification; tRNA-queuosine biosynthesis. Its function is as follows. Transfers and isomerizes the ribose moiety from AdoMet to the 7-aminomethyl group of 7-deazaguanine (preQ1-tRNA) to give epoxyqueuosine (oQ-tRNA). This is S-adenosylmethionine:tRNA ribosyltransferase-isomerase from Staphylococcus haemolyticus (strain JCSC1435).